The chain runs to 75 residues: Large ribosomal subunit protein bL31 (75 aa).

The protein belongs to the bacterial ribosomal protein bL31 family. Type A subfamily. As to quaternary structure, part of the 50S ribosomal subunit.

Functionally, binds the 23S rRNA. This Bradyrhizobium sp. (strain BTAi1 / ATCC BAA-1182) protein is Large ribosomal subunit protein bL31.